The sequence spans 448 residues: Na(+)-translocating NADH-quinone reductase subunit A (448 aa).

This sequence belongs to the NqrA family. As to quaternary structure, composed of six subunits; NqrA, NqrB, NqrC, NqrD, NqrE and NqrF.

It carries out the reaction a ubiquinone + n Na(+)(in) + NADH + H(+) = a ubiquinol + n Na(+)(out) + NAD(+). Its function is as follows. NQR complex catalyzes the reduction of ubiquinone-1 to ubiquinol by two successive reactions, coupled with the transport of Na(+) ions from the cytoplasm to the periplasm. NqrA to NqrE are probably involved in the second step, the conversion of ubisemiquinone to ubiquinol. This Alcanivorax borkumensis (strain ATCC 700651 / DSM 11573 / NCIMB 13689 / SK2) protein is Na(+)-translocating NADH-quinone reductase subunit A.